Consider the following 312-residue polypeptide: Testis-expressed protein 13B (312 aa).

This sequence belongs to the TEX13 family. As to expression, testis specific.

This chain is Testis-expressed protein 13B (TEX13B), found in Homo sapiens (Human).